The chain runs to 109 residues: Protein ripply2 (109 aa).

Polar residues predominate over residues 1 to 15 (MENITFTSGLNSEMD). 2 disordered regions span residues 1–42 (MENI…RPAD) and 88–109 (YEDP…KELR). A WRPW motif motif is present at residues 20 to 23 (WRPW). Basic and acidic residues predominate over residues 30–42 (KAPDYKPYKRPAD). The segment at 53–88 (HPVKLFWPKSQCFDYLYEDAEVLLRNYPVQATICLY) is ripply homology domain. A compositionally biased stretch (acidic residues) spans 89 to 109 (EDPDTEDEEDYSDEEDEKELR).

Belongs to the ripply family. First expressed in the paraxial mesoderm at the 90% epiboly stage, and subsequently confined to the presomitic mesoderm. Expressed in the rostral compartment of S-I and S-II.

Its subcellular location is the nucleus. Plays a role in somitogenesis. Required for somite segregation and establishment of rostrocaudal polarity in somites. The sequence is that of Protein ripply2 from Danio rerio (Zebrafish).